Here is a 331-residue protein sequence, read N- to C-terminus: tRNA N6-adenosine threonylcarbamoyltransferase (331 aa).

H107 and H111 together coordinate Fe cation. Substrate is bound by residues 129–133 (LVSGG), D162, G175, and N269. A Fe cation-binding site is contributed by D297.

The protein belongs to the KAE1 / TsaD family. It depends on Fe(2+) as a cofactor.

The protein localises to the cytoplasm. The enzyme catalyses L-threonylcarbamoyladenylate + adenosine(37) in tRNA = N(6)-L-threonylcarbamoyladenosine(37) in tRNA + AMP + H(+). Functionally, required for the formation of a threonylcarbamoyl group on adenosine at position 37 (t(6)A37) in tRNAs that read codons beginning with adenine. Is involved in the transfer of the threonylcarbamoyl moiety of threonylcarbamoyl-AMP (TC-AMP) to the N6 group of A37, together with TsaE and TsaB. TsaD likely plays a direct catalytic role in this reaction. This Wolinella succinogenes (strain ATCC 29543 / DSM 1740 / CCUG 13145 / JCM 31913 / LMG 7466 / NCTC 11488 / FDC 602W) (Vibrio succinogenes) protein is tRNA N6-adenosine threonylcarbamoyltransferase.